Here is a 117-residue protein sequence, read N- to C-terminus: Prefoldin subunit beta (117 aa).

This sequence belongs to the prefoldin subunit beta family. As to quaternary structure, heterohexamer of two alpha and four beta subunits.

It is found in the cytoplasm. Molecular chaperone capable of stabilizing a range of proteins. Seems to fulfill an ATP-independent, HSP70-like function in archaeal de novo protein folding. In Methanosarcina barkeri (strain Fusaro / DSM 804), this protein is Prefoldin subunit beta.